The primary structure comprises 306 residues: MSVPDVSVVKAFLLDLQQRICDGLEQLDGEAKFKADSWKREEGGGGTSRVLTQGKVFEQAGVNFSHVTGAAMPASATAHRPELAGRSFEAMGVSLVIHPNNPYIPTTHANVRFFIAKKEGADPVWWFGGGFDLTPYYPFKEDVIEWHQNAHDLCLPFGEEVYPKYKKWCDDYFYLPHRDETRGVGGLFFDDLNAEGFDTSFAFMQAVGNGFLTAYAPIVQRRKETQYGEREREFQLYRRGRYVEFNLVYDRGTLFGLQTGGRTESILMSMPPLVRWEYMYTPEENSPESLLYSDYLTPKDWLSLNK.

Ser94 lines the substrate pocket. Residues His98 and His108 each coordinate a divalent metal cation. The active-site Proton donor is the His108. Residue 110–112 (NVR) participates in substrate binding. Positions 147 and 177 each coordinate a divalent metal cation. An important for dimerization region spans residues 242-277 (YVEFNLVYDRGTLFGLQTGGRTESILMSMPPLVRWE). 260 to 262 (GGR) contributes to the substrate binding site.

The protein belongs to the aerobic coproporphyrinogen-III oxidase family. In terms of assembly, homodimer. A divalent metal cation is required as a cofactor.

The protein localises to the cytoplasm. It catalyses the reaction coproporphyrinogen III + O2 + 2 H(+) = protoporphyrinogen IX + 2 CO2 + 2 H2O. Its pathway is porphyrin-containing compound metabolism; protoporphyrin-IX biosynthesis; protoporphyrinogen-IX from coproporphyrinogen-III (O2 route): step 1/1. Involved in the heme biosynthesis. Catalyzes the aerobic oxidative decarboxylation of propionate groups of rings A and B of coproporphyrinogen-III to yield the vinyl groups in protoporphyrinogen-IX. This chain is Oxygen-dependent coproporphyrinogen-III oxidase, found in Shewanella woodyi (strain ATCC 51908 / MS32).